The sequence spans 123 residues: Large ribosomal subunit protein uL18 (123 aa).

This sequence belongs to the universal ribosomal protein uL18 family. As to quaternary structure, part of the 50S ribosomal subunit; part of the 5S rRNA/L5/L18/L25 subcomplex. Contacts the 5S and 23S rRNAs.

In terms of biological role, this is one of the proteins that bind and probably mediate the attachment of the 5S RNA into the large ribosomal subunit, where it forms part of the central protuberance. This chain is Large ribosomal subunit protein uL18, found in Wolbachia sp. subsp. Brugia malayi (strain TRS).